Here is a 135-residue protein sequence, read N- to C-terminus: CDGSH iron-sulfur domain-containing protein 2A (135 aa).

Residues Met-1 to Asp-37 lie on the Lumenal side of the membrane. Residues Trp-38 to Leu-60 traverse the membrane as a helical segment. Residues Pro-61 to Leu-135 lie on the Cytoplasmic side of the membrane. The [2Fe-2S] cluster site is built by Cys-99, Cys-101, Cys-110, and His-114.

The protein belongs to the CISD protein family. CISD2 subfamily. Homodimer. Requires [2Fe-2S] cluster as cofactor.

The protein resides in the endoplasmic reticulum membrane. Its subcellular location is the mitochondrion outer membrane. In terms of biological role, regulator of autophagy that contributes to antagonize becn1-mediated cellular autophagy at the endoplasmic reticulum. Participates in the interaction of bcl2 with becn1 and is required for bcl2-mediated depression of endoplasmic reticulum Ca(2+) stores during autophagy. This chain is CDGSH iron-sulfur domain-containing protein 2A (cisd2a), found in Oncorhynchus mykiss (Rainbow trout).